Reading from the N-terminus, the 859-residue chain is Replication origin-binding protein (859 aa).

One can recognise a Helicase ATP-binding domain in the interval 70–235; sequence PLAADARRVT…AALRGAGSVH (166 aa). 83-90 lines the ATP pocket; that stretch reads APMGSGKT.

Belongs to the herpesviridae OriBP family. As to quaternary structure, homodimer. Interacts with the major DNA-binding protein. Interacts with the helicase/primase component UL8 and the polymerase accessory protein.

The protein resides in the host nucleus. In terms of biological role, functions as a docking protein to recruit essential components of the viral replication machinery to viral DNA origins. In the presence of the major DNA-binding protein, opens dsDNA leading to a conformational change in the origin that facilitates DNA unwinding and subsequent replication. This is Replication origin-binding protein (UL9) from Bovine herpesvirus 1.1 (strain Cooper) (BoHV-1).